The sequence spans 358 residues: Anhydro-N-acetylmuramic acid kinase (358 aa).

9 to 16 (GTSLDGVD) contributes to the ATP binding site.

The protein belongs to the anhydro-N-acetylmuramic acid kinase family.

The enzyme catalyses 1,6-anhydro-N-acetyl-beta-muramate + ATP + H2O = N-acetyl-D-muramate 6-phosphate + ADP + H(+). It functions in the pathway amino-sugar metabolism; 1,6-anhydro-N-acetylmuramate degradation. The protein operates within cell wall biogenesis; peptidoglycan recycling. Functionally, catalyzes the specific phosphorylation of 1,6-anhydro-N-acetylmuramic acid (anhMurNAc) with the simultaneous cleavage of the 1,6-anhydro ring, generating MurNAc-6-P. Is required for the utilization of anhMurNAc either imported from the medium or derived from its own cell wall murein, and thus plays a role in cell wall recycling. The protein is Anhydro-N-acetylmuramic acid kinase of Acidiphilium cryptum (strain JF-5).